A 59-amino-acid chain; its full sequence is MLVEEVLLLLVAIALISAFALTVTGVVQNAVSQILGFRNATNNVINGLVDAVKQLIGLS.

Residues 7-27 (LLLLVAIALISAFALTVTGVV) traverse the membrane as a helical segment.

It localises to the membrane. This is an uncharacterized protein from Pyrobaculum aerophilum (strain ATCC 51768 / DSM 7523 / JCM 9630 / CIP 104966 / NBRC 100827 / IM2).